Consider the following 336-residue polypeptide: Biotin synthase (336 aa).

The region spanning 54–281 (NAIQLSTLLS…KAMVRLSAGR (228 aa)) is the Radical SAM core domain. Positions 69, 73, and 76 each coordinate [4Fe-4S] cluster. Residues Cys113, Cys144, Cys204, and Arg276 each contribute to the [2Fe-2S] cluster site.

The protein belongs to the radical SAM superfamily. Biotin synthase family. In terms of assembly, homodimer. [4Fe-4S] cluster is required as a cofactor. Requires [2Fe-2S] cluster as cofactor.

The catalysed reaction is (4R,5S)-dethiobiotin + (sulfur carrier)-SH + 2 reduced [2Fe-2S]-[ferredoxin] + 2 S-adenosyl-L-methionine = (sulfur carrier)-H + biotin + 2 5'-deoxyadenosine + 2 L-methionine + 2 oxidized [2Fe-2S]-[ferredoxin]. Its pathway is cofactor biosynthesis; biotin biosynthesis; biotin from 7,8-diaminononanoate: step 2/2. In terms of biological role, catalyzes the conversion of dethiobiotin (DTB) to biotin by the insertion of a sulfur atom into dethiobiotin via a radical-based mechanism. The polypeptide is Biotin synthase (Burkholderia pseudomallei (strain 1710b)).